Consider the following 925-residue polypeptide: Antiviral innate immune response receptor RIG-I (925 aa).

CARD domains follow at residues M1–E87 and W92–K172. S8 is subject to (Microbial infection) Phosphoserine. Phosphoserine is present on S8. Residues K48, K96, K154, and K164 each participate in a glycyl lysine isopeptide (Lys-Gly) (interchain with G-Cter in ubiquitin) cross-link. T170 carries the post-translational modification Phosphothreonine. Residues K172, K181, K193, and K203 each participate in a glycyl lysine isopeptide (Lys-Gly) (interchain with G-Cter in ubiquitin) cross-link. The segment at E218 to K925 is interaction with ZC3HAV1. The 180-residue stretch at A251–L430 folds into the Helicase ATP-binding domain. A264–T271 is a binding site for ATP. The DECH box motif lies at D372–H375. A (Microbial infection) Deamidated asparagine; by herpes simplex virus 1/HHV-1 UL37 mark is found at N495 and N549. Residues K610 to F776 enclose the Helicase C-terminal domain. The mediates interaction with RNF135 stretch occupies residues G735 to K925. T770 carries the phosphothreonine; by CK2 modification. The region spanning Q794–K925 is the RLR CTR domain. C810 lines the Zn(2+) pocket. K812 is covalently cross-linked (Glycyl lysine isopeptide (Lys-Gly) (interchain with G-Cter in ubiquitin)). Position 813 (C813) interacts with Zn(2+). Phosphoserine; by CK2 is present on residues S854 and S855. An N6-acetyllysine modification is found at K858. The Zn(2+) site is built by C864 and C869. K909 is subject to N6-acetyllysine.

The protein belongs to the helicase family. RLR subfamily. In terms of assembly, monomer; maintained as a monomer in an autoinhibited state. Upon binding of viral RNAs and conformational shift, homooligomerizes and forms filaments on these molecules. Interacts (via tandem CARD domain) with MAVS/IPS1 promoting its filamentation. Interacts with DHX58/LGP2, IKBKE, TBK1 and STING1. Interacts (via CARD domain) with TRIM25 (via SPRY domain). Interacts (double-stranded RNA-bound oligomeric form) with RNF135 (homodimer); involved in RNA length-dependent activation of the RIG-I signaling pathway. Interacts with CYLD. Interacts with NLRC5; blocks the interaction of MAVS/IPS1 to RIGI. Interacts with SRC. Interacts with DDX60. Interacts with isoform 2 of ZC3HAV1 (via zinc-fingers) in an RNA-dependent manner. Interacts (via tandem CARD domain) with SEC14L1; the interaction is direct and impairs the interaction of RIGI with MAVS/IPS1. Interacts with VCP/p97; interaction is direct and allows the recruitment of RNF125 and subsequent ubiquitination and degradation. Interacts with NOP53; may regulate RIGI through USP15-mediated 'Lys-63'-linked deubiquitination. Interacts with SIGLEC10, CBL and PTPN11; within a negative feedback loop leading to RIGI degradation. Interacts with LRRC25. Interacts with ZCCHC3; leading to activation of RIGI. Interacts with RNF123. Interacts with UBE2D3 and UBE2N; E2 ubiquitin ligases involved in RNF135-mediated ubiquitination of RIGI and activation of the RIG-I signaling pathway. Interacts with IFIT3. Interacts with DDX3X. Interacts with RTN3. Interacts with ARL16; this interaction is GTP-dependent and induced upon viral infection; this interaction suppresses the RNA sensing activity of RIGI. Interacts with DHX16; this interaction enhances RIGI-mediated antiviral response. Interacts with IRGM; promoting RIGI degradation. Interacts with IFI6; this interaction inhibits RIGI activation. Interacts with ECSIT; this interaction bridges RIGI to the MAVS complex at the mitochondrion. Interacts with YWHAE; this interaction drives RIGI at the mitochondrion. (Microbial infection) Interacts with protein Z of Guanarito virus, Machupo virus, Junin arenavirus and Sabia virus. This interaction disrupts its interaction with MAVS/IPS1, impeding downstream IRF3 and NF-kappa-B activation and resulting in decreased IFN-beta induction. As to quaternary structure, (Microbial infection) Interacts (via CARD domain) with Human respiratory syncytial virus A non-structural protein 2 (NS2) and this interaction disrupts its interaction with MAVS/IPS1, impeding downstream IRF3 activation. In terms of assembly, (Microbial infection) Interacts with Rotavirus A non-structural protein 1 (NSP1) and this interaction induces down-regulation of RIGI. (Microbial infection) Interacts with paramyxoviruses (Sendai virus, Nipah virus, Measles virus and Parainfluenza virus 5) protein V; this interaction inhibits TRIM25-mediated ubiquitination of RIG-I and prevents downstream RIG-I signaling thereby inhibiting the IFN responses. As to quaternary structure, (Microbial infection) Interacts with herpes simplex virus 1 protein US11; this interaction prevents the interaction of MAVS/IPS1 to RIGI. In terms of assembly, (Microbial infection) Interacts with herpes simplex virus 1 protein UL37; this interaction deaminates RIGI and inhibits its activation. (Microbial infection) Interacts with Severe fever with thrombocytopenia virus (SFTSV) NSs; this interaction this interaction sequesters RIGI in NSs-induced cytoplasmic inclusion bodies thereby inhibiting the IFN responses. Phosphorylated in resting cells and dephosphorylated in RNA virus-infected cells. Phosphorylation at Thr-770, Ser-854 and Ser-855 results in inhibition of its activity while dephosphorylation at these sites results in its activation. Post-translationally, ubiquitinated. 'Lys-63' ubiquitination by RNF135, which occurs after RNA-binding and homodimerization, releases the autoinhibition of the CARD domains by the RLR CTR domain, an essential step in the activation of the RIG-I signaling pathway. Lys-172 is the critical site of ubiquitination for MAVS/IPS1 binding and to induce anti-viral signal transduction. Lys-154, Lys-164 and Lys-172 are shared sites for RNF135-mediated and TRIM4-mediated ubiquitination. Also undergoes 'Lys-48' ubiquitination at Lys-181 by RNF125 that leads to proteasomal degradation. 'Lys-48' ubiquitination follows viral infection and is enhanced by 'Lys-63'-linked ubiquitination of the CARD domains that promotes interaction with VCP/p97 and subsequent recruitment of RNF125. Within a negative feedback loop involving SIGLEC10 and PTPN11, 'Lys-48' ubiquitination at Lys-812 by CBL also elicits the proteasomal degradation of RIGI. Deubiquitinated by CYLD, a protease that selectively cleaves 'Lys-63'-linked ubiquitin chains. Also probably deubiquitinated by USP17L2/USP17 that cleaves 'Lys-48'- and 'Lys-63'-linked ubiquitin chains and positively regulates the receptor. Ubiquitinated by TRIM40 via 'Lys-48'-linked ubiquitination; leading to proteasomal degradation. Deubiquitinated by USP27X that cleaves 'Lys-63'-linked ubiquitin chains and inhibits the innate immune receptor activity. Deubiquitinated by USP3 that also cleaves 'Lys-63'-linked ubiquitin chains and inhibits the innate immune receptor activity. Undergoes 'Lys-48'-linked ubiquitination catalyzed by MARCHF5 at Lys-193 and Lys-203, leading to proteasomal degradation. In terms of processing, phosphorylated at Ser-8 and Thr-170; these phosphorylations suppresse the TRIM25-mediated 'Lys-63'-linked ubiquitination of RIG-I and thereby prevents RIG-I downstream signaling. Dephosphorylated by phosphatases PPP1CA/PPP1CC; this step is essential to activate RIGI and initiate downstream signaling. ISGylated. Conjugated to ubiquitin-like protein ISG15 upon IFN-beta stimulation. ISGylation negatively regulates its function in antiviral signaling response. Post-translationally, sumoylated, probably by MUL1; inhibiting its polyubiquitination. In terms of processing, acetylated in response to RNA virus infection. Deacetylated by HDAC6 in the presence of viral mRNAs which is required for detection of viral RNA by RIGI. (Microbial infection) Deamidated on Asn-495 and Asn-549 by herpes simplex virus 1 protein UL37. These modifications eliminate RIGI detection of viral RNA and restriction of viral replication. Post-translationally, degraded via selective autophagy following interaction with IRGM. IRGM promotes RIGI recruitment to autophagosome membranes, promoting its SQSTM1/p62-dependent autophagic degradation. In terms of processing, (Microbial infection) Cleaved by the protease 3C of coxsackievirus B3, poliovirus and enterovirus 71 allowing the virus to disrupt the host type I interferon production. (Microbial infection) Phosphorylated at Ser-8 by herpes simplex virus 1 protein US3 leading to inhibition of critical RIGI activation steps. Present in vascular smooth cells (at protein level).

It localises to the cytoplasm. It is found in the cell projection. Its subcellular location is the ruffle membrane. The protein localises to the cytoskeleton. The protein resides in the cell junction. It localises to the tight junction. The catalysed reaction is ATP + H2O = ADP + phosphate + H(+). In terms of biological role, innate immune receptor that senses cytoplasmic viral nucleic acids and activates a downstream signaling cascade leading to the production of type I interferons and pro-inflammatory cytokines. Forms a ribonucleoprotein complex with viral RNAs on which it homooligomerizes to form filaments. The homooligomerization allows the recruitment of RNF135 an E3 ubiquitin-protein ligase that activates and amplifies the RIG-I-mediated antiviral signaling in an RNA length-dependent manner through ubiquitination-dependent and -independent mechanisms. Upon activation, associates with mitochondria antiviral signaling protein (MAVS/IPS1) that activates the IKK-related kinases TBK1 and IKBKE which in turn phosphorylate the interferon regulatory factors IRF3 and IRF7, activating transcription of antiviral immunological genes including the IFN-alpha and IFN-beta interferons. Ligands include 5'-triphosphorylated ssRNAs and dsRNAs but also short dsRNAs (&lt;1 kb in length). In addition to the 5'-triphosphate moiety, blunt-end base pairing at the 5'-end of the RNA is very essential. Overhangs at the non-triphosphorylated end of the dsRNA RNA have no major impact on its activity. A 3'overhang at the 5'triphosphate end decreases and any 5'overhang at the 5' triphosphate end abolishes its activity. Detects both positive and negative strand RNA viruses including members of the families Paramyxoviridae: Human respiratory syncytial virus and measles virus (MeV), Rhabdoviridae: vesicular stomatitis virus (VSV), Orthomyxoviridae: influenza A and B virus, Flaviviridae: Japanese encephalitis virus (JEV), hepatitis C virus (HCV), dengue virus (DENV) and west Nile virus (WNV). It also detects rotaviruses and reoviruses. Detects and binds to SARS-CoV-2 RNAs which is inhibited by m6A RNA modifications. Also involved in antiviral signaling in response to viruses containing a dsDNA genome such as Epstein-Barr virus (EBV). Detects dsRNA produced from non-self dsDNA by RNA polymerase III, such as Epstein-Barr virus-encoded RNAs (EBERs). May play important roles in granulocyte production and differentiation, bacterial phagocytosis and in the regulation of cell migration. The chain is Antiviral innate immune response receptor RIG-I from Homo sapiens (Human).